Consider the following 1079-residue polypeptide: Integrator complex subunit 3 homolog (1079 aa).

Disordered regions lie at residues 539 to 574 (ESSERETEAVFSDDDGENIARCNKNDENTDDDDDLP), 925 to 949 (YPSSSPNKRKRPSKGSSAASSTPSA), and 1010 to 1079 (AVGR…NDSD). Residues 938–949 (KGSSAASSTPSA) show a composition bias toward low complexity. Residues Ser-1049, Ser-1050, Ser-1054, and Ser-1055 each carry the phosphoserine modification. The span at 1062 to 1073 (HKITQAAKKRKK) shows a compositional bias: basic residues.

It belongs to the Integrator subunit 3 family. As to quaternary structure, belongs to the multiprotein complex Integrator, at least composed of IntS1, IntS2, IntS3, IntS4, omd/IntS5, IntS6, defl/IntS7, IntS8, IntS9, IntS10, IntS11, IntS12, asun/IntS13, IntS14 and IntS15. The core complex associates with protein phosphatase 2A subunits mts/PP2A and Pp2A-29B, to form the Integrator-PP2A (INTAC) complex.

It localises to the nucleus. The protein localises to the cytoplasm. Functionally, component of the integrator complex, a multiprotein complex that terminates RNA polymerase II (Pol II) transcription in the promoter-proximal region of genes. The integrator complex provides a quality checkpoint during transcription elongation by driving premature transcription termination of transcripts that are unfavorably configured for transcriptional elongation: the complex terminates transcription by (1) catalyzing dephosphorylation of the C-terminal domain (CTD) of Pol II subunit Polr2A/Rbp1 and Spt5, and (2) degrading the exiting nascent RNA transcript via endonuclease activity. The integrator complex is also involved in the 3'-end processing of the U7 snRNA, and also the spliceosomal snRNAs U1, U2, U4 and U5. The chain is Integrator complex subunit 3 homolog (IntS3) from Drosophila virilis (Fruit fly).